Reading from the N-terminus, the 288-residue chain is 30 kDa spicule matrix protein (288 aa).

An N-terminal signal peptide occupies residues 1–20 (MRCFVYVLVCVVASVSYSRA). The 71-residue stretch at 93–163 (ANMYCGQMHP…YTNWEGMVAP (71 aa)) folds into the C-type lectin domain. Asparagine 103 is a glycosylation site (N-linked (GlcNAc...) asparagine).

In terms of tissue distribution, spines and tube feet.

Functionally, matrix protein of the sea urchin embryo spicule. The function of the matrix proteins is to direct crystal growth in certain orientations and inhibit growth in others. This chain is 30 kDa spicule matrix protein (SM30), found in Hemicentrotus pulcherrimus (Sea urchin).